We begin with the raw amino-acid sequence, 1487 residues long: Collagen alpha-1(II) chain (1487 aa).

The N-terminal stretch at 1–25 (MIRLGAPQTLVLLTLLVAAVLRCHG) is a signal peptide. Residues 26–181 (QDVQKAGSCV…PPGLGGNFAA (156 aa)) constitute a propeptide, N-terminal propeptide. The region spanning 32–90 (GSCVQDGQRYNDKDVWKPEPCRICVCDTGTVLCDDIICEDMKDCLSPETPFGECCPICS) is the VWFC domain. The interval 96–1234 (ASGQPGPKGQ…GLGQREKGPD (1139 aa)) is disordered. Basic and acidic residues-rich tracts occupy residues 105-116 (QKGEPGDIKDIV) and 133-154 (PRGD…RDGE). Over residues 158–173 (PGNPGPPGPPGPPGPP) the composition is skewed to pro residues. Position 190 is a 5-hydroxylysine (Lys-190). The O-linked (Gal...) hydroxylysine glycan is linked to Lys-190. Low complexity predominate over residues 192–203 (GGAQMGVMQGPM). The segment at 201-1214 (GPMGPMGPRG…PGPPGPPGPP (1014 aa)) is triple-helical region. Residues 208 to 217 (PRGPPGPAGA) show a composition bias toward pro residues. A hydroxyproline mark is found at Pro-212, Pro-218, Pro-230, Pro-233, Pro-245, Pro-248, Pro-251, Pro-260, Pro-269, Pro-278, Pro-281, and Pro-284. Residues 218-239 (PGPQGFQGNPGEPGEPGVSGPM) are compositionally biased toward low complexity. Residues 241 to 250 (PRGPPGPPGK) are compositionally biased toward pro residues. Over residues 251-265 (PGDDGEAGKPGKSGE) the composition is skewed to basic and acidic residues. 5-hydroxylysine is present on Lys-287. Residue Lys-287 is glycosylated (O-linked (Gal...) hydroxylysine). A Hydroxyproline modification is found at Pro-293. The residue at position 299 (Lys-299) is a 5-hydroxylysine. The O-linked (Gal...) hydroxylysine glycan is linked to Lys-299. A Hydroxyproline modification is found at Pro-305. Lys-308 is modified (5-hydroxylysine). A glycan (O-linked (Gal...) hydroxylysine) is linked at Lys-308. Residues 310–320 (ESGSPGENGSP) are compositionally biased toward low complexity. 8 positions are modified to hydroxyproline: Pro-314, Pro-320, Pro-329, Pro-350, Pro-356, Pro-365, Pro-368, and Pro-371. The span at 335 to 350 (TGPAGAAGARGNDGQP) shows a compositional bias: low complexity. Residues 360–369 (GPAGGPGFPG) are compositionally biased toward gly residues. 2 stretches are compositionally biased toward low complexity: residues 370 to 382 (APGA…PTGA) and 391 to 431 (PRGE…AGAP). Lys-374 carries the post-translational modification 5-hydroxylysine. Residue Lys-374 is glycosylated (O-linked (Gal...) hydroxylysine). Hydroxyproline occurs at positions 395, 398, 401, 410, and 416. Position 419 is a 5-hydroxylysine (Lys-419). 4 positions are modified to hydroxyproline: Pro-425, Pro-431, Pro-434, and Pro-440. A compositionally biased stretch (pro residues) spans 433–442 (FPGPRGPPGP). Position 452 is a 5-hydroxylysine (Lys-452). At Pro-458 the chain carries Hydroxyproline. Residues Lys-464 and Lys-470 each carry the 5-hydroxylysine modification. Pro-473, Pro-482, Pro-497, Pro-506, Pro-512, and Pro-518 each carry hydroxyproline. Lys-527 is subject to 5-hydroxylysine. Position 530 is a hydroxyproline (Pro-530). Lys-542 bears the 5-hydroxylysine mark. A hydroxyproline mark is found at Pro-551, Pro-557, Pro-566, Pro-581, Pro-587, Pro-590, Pro-599, and Pro-605. Lys-608 is subject to 5-hydroxylysine. O-linked (Gal...) hydroxylysine glycosylation occurs at Lys-608. The residue at position 614 (Pro-614) is a Hydroxyproline. Lys-620 is subject to 5-hydroxylysine. Lys-620 is a glycosylation site (O-linked (Gal...) hydroxylysine). Residues 622-631 (LPGAPGLRGL) show a composition bias toward low complexity. 6 positions are modified to hydroxyproline: Pro-623, Pro-626, Pro-632, Pro-644, Pro-659, and Pro-668. Positions 656-667 (QGAPGPSGFQGL) are enriched in low complexity. At Pro-670 the chain carries 3-hydroxyproline. Residues Pro-671 and Pro-674 each carry the hydroxyproline modification. Residues 721-736 (LPGTPGTDGPKGAAGP) show a composition bias toward low complexity. A compositionally biased stretch (basic and acidic residues) spans 764-775 (KGDRGDVGEKGP). 2 stretches are compositionally biased toward low complexity: residues 833 to 848 (AGFA…PGAK) and 877 to 913 (PTGV…SNGN). Pro-907 is subject to 3-hydroxyproline. 3 positions are modified to 4-hydroxyproline: Pro-908, Pro-914, and Pro-920. A compositionally biased stretch (pro residues) spans 1069–1079 (APGPPGSPGPA). Positions 1091 to 1109 (AGAQGPMGPAGPAGARGMP) are enriched in low complexity. A compositionally biased stretch (basic and acidic residues) spans 1115–1129 (RGDKGETGEAGERGL). The residue at position 1130 (Lys-1130) is a 5-hydroxylysine. Lys-1130 carries O-linked (Gal...) hydroxylysine glycosylation. Residue Pro-1144 is modified to 3-hydroxyproline. The span at 1148-1157 (SGDQGASGPA) shows a compositional bias: low complexity. Pro-1181 carries the 4-hydroxyproline modification. Pro-1186 carries the post-translational modification 3-hydroxyproline. Position 1187 is a 4-hydroxyproline (Pro-1187). The span at 1199–1216 (AGPPGNPGPPGPPGPPGP) shows a compositional bias: pro residues. A 3-hydroxyproline modification is found at Pro-1201. Pro-1202 and Pro-1205 each carry 4-hydroxyproline. Residue Pro-1207 is modified to 3-hydroxyproline. 2 positions are modified to 4-hydroxyproline: Pro-1208 and Pro-1211. Position 1213 is a 3-hydroxyproline (Pro-1213). At Pro-1214 the chain carries 4-hydroxyproline. Residues 1215 to 1241 (GPGIDMSAFAGLGQREKGPDPLQYMRA) form a nonhelical region (C-terminal) region. Residues 1253–1487 (AEVDATLKSL…GVDIGPVCFL (235 aa)) enclose the Fibrillar collagen NC1 domain. Intrachain disulfides connect Cys-1283/Cys-1315, Cys-1323/Cys-1485, and Cys-1393/Cys-1438. Residues Asp-1301, Asn-1303, Gln-1304, Cys-1306, and Asp-1309 each coordinate Ca(2+). Asn-1388 is a glycosylation site (N-linked (GlcNAc...) asparagine).

It belongs to the fibrillar collagen family. As to quaternary structure, homotrimers of alpha 1(II) chains. In terms of processing, probably 3-hydroxylated on prolines by LEPREL1. Proline residues at the third position of the tripeptide repeating unit (G-X-P) are hydroxylated in some or all of the chains. Proline residues at the second position of the tripeptide repeating unit (G-P-X) are hydroxylated in some of the chains. Post-translationally, O-linked glycans consist of Glc-Gal disaccharides bound to the oxygen atom of post-translationally added hydroxyl groups. Contains mostly 4-hydroxyproline. Prolines at the third position of the tripeptide repeating unit (G-X-P) are 4-hydroxylated in some or all of the chains. In terms of processing, contains 3-hydroxyproline at a few sites. This modification occurs on the first proline residue in the sequence motif Gly-Pro-Hyp, where Hyp is 4-hydroxyproline. Post-translationally, lysine residues at the third position of the tripeptide repeating unit (G-X-Y) are 5-hydroxylated in some or all of the chains. O-glycosylated on hydroxylated lysine residues. The O-linked glycan consists of a Glc-Gal disaccharide.

The protein resides in the secreted. Its subcellular location is the extracellular space. It localises to the extracellular matrix. Its function is as follows. Type II collagen is specific for cartilaginous tissues. It is essential for the normal embryonic development of the skeleton, for linear growth and for the ability of cartilage to resist compressive forces. The polypeptide is Collagen alpha-1(II) chain (Bos taurus (Bovine)).